A 372-amino-acid chain; its full sequence is N-methyl-L-tryptophan oxidase (372 aa).

4–34 provides a ligand contact to FAD; sequence DLIIIGSGSVGAAAGYYATRAGLKVLMTDAH. Residue cysteine 307 is modified to S-8alpha-FAD cysteine.

The protein belongs to the MSOX/MTOX family. MTOX subfamily. Monomer. The cofactor is FAD.

The catalysed reaction is N(alpha)-methyl-L-tryptophan + O2 + H2O = L-tryptophan + formaldehyde + H2O2. Its function is as follows. Catalyzes the oxidative demethylation of N-methyl-L-tryptophan. The polypeptide is N-methyl-L-tryptophan oxidase (Salmonella dublin (strain CT_02021853)).